Reading from the N-terminus, the 286-residue chain is Large ribosomal subunit protein uL2 (286 aa).

2 disordered regions span residues 22–59 and 215–286; these read KELT…GGGH and LGRR…KLHK. Basic and acidic residues predominate over residues 230-240; that stretch reads DHPHGGGEGRT. Residues 255–286 show a composition bias toward basic residues; it reads KGGRTRQKRKPSNSSIVRRRKSRRYGQLKLHK.

Belongs to the universal ribosomal protein uL2 family. As to quaternary structure, part of the 50S ribosomal subunit. Forms a bridge to the 30S subunit in the 70S ribosome.

Functionally, one of the primary rRNA binding proteins. Required for association of the 30S and 50S subunits to form the 70S ribosome, for tRNA binding and peptide bond formation. It has been suggested to have peptidyltransferase activity; this is somewhat controversial. Makes several contacts with the 16S rRNA in the 70S ribosome. The polypeptide is Large ribosomal subunit protein uL2 (Rhodopirellula baltica (strain DSM 10527 / NCIMB 13988 / SH1)).